A 564-amino-acid chain; its full sequence is Oxalyl-CoA decarboxylase (564 aa).

Positions 32 and 118 each coordinate substrate. ADP is bound by residues arginine 158 and lysine 220. 261–265 (AAARS) provides a ligand contact to substrate. 3 residues coordinate ADP: arginine 280, aspartate 302, and isoleucine 322. Residue asparagine 355 coordinates substrate. Thiamine diphosphate is bound by residues tyrosine 372 and 396–398 (ANT). 403-404 (RN) is a substrate binding site. 421–423 (GVM) provides a ligand contact to thiamine diphosphate. Residue aspartate 447 coordinates Mg(2+). Position 448–449 (448–449 (SA)) interacts with thiamine diphosphate. Mg(2+) contacts are provided by asparagine 474 and glycine 476. Position 478 (tyrosine 478) interacts with thiamine diphosphate. 550 to 552 (SGH) is a binding site for substrate.

It belongs to the TPP enzyme family. Homotetramer; dimer of dimers. The cofactor is Mg(2+). Thiamine diphosphate serves as cofactor.

It carries out the reaction oxalyl-CoA + H(+) = formyl-CoA + CO2. The protein operates within metabolic intermediate degradation; oxalate degradation; CO(2) and formate from oxalate: step 2/2. Its function is as follows. Involved in the catabolism of oxalate and in the adapatation to low pH via the induction of the oxalate-dependent acid tolerance response (ATR). Catalyzes the decarboxylation of oxalyl-CoA to yield carbon dioxide and formyl-CoA. This is Oxalyl-CoA decarboxylase (oxc) from Escherichia coli O157:H7.